Here is a 1163-residue protein sequence, read N- to C-terminus: Leptin receptor (1163 aa).

An N-terminal signal peptide occupies residues 1–21 (MICQKFCVVLLHWEFICVITA). At 22–837 (FNLSYPITPW…QDNTEKHQND (816 aa)) the chain is on the extracellular side. 7 N-linked (GlcNAc...) asparagine glycosylation sites follow: asparagine 23, asparagine 41, asparagine 56, asparagine 71, asparagine 79, asparagine 96, and asparagine 114. Cystine bridges form between cysteine 37/cysteine 88 and cysteine 87/cysteine 97. 2 disulfide bridges follow: cysteine 129/cysteine 140 and cysteine 184/cysteine 194. Asparagine 185, asparagine 204, asparagine 274, asparagine 345, and asparagine 395 each carry an N-linked (GlcNAc...) asparagine glycan. Residues 237 to 331 (PPLGLRMEIT…TPHVFTTQDV (95 aa)) form the Fibronectin type-III 1 domain. 2 disulfides stabilise this stretch: cysteine 350–cysteine 410 and cysteine 411–cysteine 416. Asparagine 431 is a glycosylation site (N-linked (GlcNAc...) asparagine). Disulfide bonds link cysteine 434–cysteine 445, cysteine 471–cysteine 526, and cysteine 486–cysteine 496. The interval 465-482 (RRSSLYCFDIPSIHPISK) is leptin-binding. Fibronectin type-III domains are found at residues 537 to 632 (PPSS…TVVM), 637 to 730 (PMRG…LTFS), and 738 to 831 (IVQS…QDNT). A WSXWS motif motif is present at residues 620–624 (WSNWS). 7 N-linked (GlcNAc...) asparagine glycosylation sites follow: asparagine 622, asparagine 657, asparagine 668, asparagine 686, asparagine 695, asparagine 726, and asparagine 748. Residues 838–860 (AGLYVIVPVIISSSILLLGTLLI) traverse the membrane as a helical segment. Topologically, residues 861 to 1163 (LHQRMKKLFW…MENKMCDLTV (303 aa)) are cytoplasmic. The short motif at 869-877 (FWEDVPNPK) is the Box 1 motif element. At serine 880 the chain carries Phosphoserine. The tract at residues 891-896 (ETFEHL) is required for JAK2 activation. Residues 896–904 (LFIKHTASV) are required for STAT3 phosphorylation. At tyrosine 984 the chain carries Phosphotyrosine; by JAK2. Tyrosine 1077 carries the phosphotyrosine modification. Phosphotyrosine; by JAK2 is present on tyrosine 1139.

The protein belongs to the type I cytokine receptor family. Type 2 subfamily. As to quaternary structure, present as a mixture of monomers and dimers. The phosphorylated receptor binds a number of SH2 domain-containing proteins such as JAK2, STAT3, PTPN11, and SOCS3. Interaction with SOCS3 inhibits JAK/STAT signaling and MAPK cascade. In terms of processing, on ligand binding, phosphorylated on two conserved C-terminal tyrosine residues (isoform B only) by JAK2. Tyr-984 is required for complete binding and activation of PTPN11, ERK/FOS activation and, for interaction with SOCS3. Phosphorylation on Tyr-1139 is required for STAT3 binding/activation. Post-translationally, on ligand binding, phosphorylated on two conserved C-terminal tyrosine residues (isoform B only) by JAK2. Tyr-984 is required for complete binding and activation of PTPN11, ERK/FOS activation,for interaction with SOCS3 and SOCS3 mediated inhibition of leptin signaling. Phosphorylation on Tyr-1139 is required for STAT3 binding/activation. Phosphorylation of Tyr-1077 has a more accessory role. As to expression, widely expressed. High expression of isoform B in liver, adipose tissue, hypothalamus and choroid plexus.

The protein localises to the cell membrane. It localises to the basolateral cell membrane. Receptor for hormone LEP/leptin. On ligand binding, mediates LEP central and peripheral effects through the activation of different signaling pathways such as JAK2/STAT3 and MAPK cascade/FOS. In the hypothalamus, LEP acts as an appetite-regulating factor that induces a decrease in food intake and an increase in energy consumption by inducing anorexinogenic factors and suppressing orexigenic neuropeptides, also regulates bone mass and secretion of hypothalamo-pituitary-adrenal hormones. In the periphery, increases basal metabolism, influences reproductive function, regulates pancreatic beta-cell function and insulin secretion, is pro-angiogenic and affects innate and adaptive immunity. Control of energy homeostasis and melanocortin production (stimulation of POMC and full repression of AgRP transcription) is mediated by STAT3 signaling, whereas distinct signals regulate NPY and the control of fertility, growth and glucose homeostasis. Involved in the regulation of counter-regulatory response to hypoglycemia by inhibiting neurons of the parabrachial nucleus. Has a specific effect on T lymphocyte responses, differentially regulating the proliferation of naive and memory T-cells. Leptin increases Th1 and suppresses Th2 cytokine production. In terms of biological role, may transport LEP across the blood-brain barrier. Binds LEP and mediates LEP endocytosis. Does not induce phosphorylation of and activate STAT3. This chain is Leptin receptor (LEPR), found in Macaca mulatta (Rhesus macaque).